Reading from the N-terminus, the 635-residue chain is Phosphatidylserine decarboxylase proenzyme 2 (635 aa).

The region spanning Lys-20 to Lys-146 is the C2 domain. EF-hand domains follow at residues Thr-174–Leu-209 and Val-210–Gln-245. Residues Asp-187, Asn-189, Asp-191, Gln-193, Glu-198, Asp-223, Asn-225, Asp-227, and Glu-234 each coordinate Ca(2+). Residues Asp-443, His-499, and Ser-587 each act as charge relay system; for autoendoproteolytic cleavage activity in the active site. Ser-587 functions as the Schiff-base intermediate with substrate; via pyruvic acid; for decarboxylase activity in the catalytic mechanism. Position 587 is a pyruvic acid (Ser); by autocatalysis (Ser-587).

It belongs to the phosphatidylserine decarboxylase family. PSD-B subfamily. Eukaryotic type II sub-subfamily. Heterodimer of a large membrane-associated beta subunit and a small pyruvoyl-containing alpha subunit. Pyruvate serves as cofactor. Is synthesized initially as an inactive proenzyme. Formation of the active enzyme involves a self-maturation process in which the active site pyruvoyl group is generated from an internal serine residue via an autocatalytic post-translational modification. Two non-identical subunits are generated from the proenzyme in this reaction, and the pyruvate is formed at the N-terminus of the alpha chain, which is derived from the carboxyl end of the proenzyme. The autoendoproteolytic cleavage occurs by a canonical serine protease mechanism, in which the side chain hydroxyl group of the serine supplies its oxygen atom to form the C-terminus of the beta chain, while the remainder of the serine residue undergoes an oxidative deamination to produce ammonia and the pyruvoyl prosthetic group on the alpha chain. During this reaction, the Ser that is part of the protease active site of the proenzyme becomes the pyruvoyl prosthetic group, which constitutes an essential element of the active site of the mature decarboxylase. As to expression, highly expressed in flowers and at lower levels in leaves.

Its subcellular location is the vacuole membrane. It carries out the reaction a 1,2-diacyl-sn-glycero-3-phospho-L-serine + H(+) = a 1,2-diacyl-sn-glycero-3-phosphoethanolamine + CO2. It participates in phospholipid metabolism; phosphatidylethanolamine biosynthesis; phosphatidylethanolamine from CDP-diacylglycerol: step 2/2. Catalyzes the formation of phosphatidylethanolamine (PtdEtn) from phosphatidylserine (PtdSer). Plays a central role in phospholipid metabolism and in the interorganelle trafficking of phosphatidylserine. Contributes only to a minor proportion of PtdEtn production. The chain is Phosphatidylserine decarboxylase proenzyme 2 (PSD2) from Arabidopsis thaliana (Mouse-ear cress).